A 264-amino-acid chain; its full sequence is Osteopontin (264 aa).

Positions 1–16 (MKLAFLCLCFISIAAA) are cleaved as a signal peptide. Disordered regions lie at residues 21-141 (KSRQ…RGDS) and 166-264 (IEDD…EVTR). Residues 31–51 (SEEKYDPRSHHTHRYHQDHVD) show a composition bias toward basic and acidic residues. Polar residues predominate over residues 52–73 (SQSQEHLQQTQNDLASLQQTHY). Residues 97-118 (AVDDDDDDDNDSNDTDESDEVV) show a composition bias toward acidic residues. Asparagine 106 and asparagine 109 each carry an N-linked (GlcNAc...) asparagine glycan. Positions 132-134 (RGD) match the Cell attachment site motif. The span at 186–212 (KESREQDSRELAQHQSVENDSRPRFDS) shows a compositional bias: basic and acidic residues. Residues asparagine 204 and asparagine 242 are each glycosylated (N-linked (GlcNAc...) asparagine). Residues 233–246 (ASRSAVDTSNQTLE) show a composition bias toward polar residues. Residues 252–264 (EDRHSIENNEVTR) are compositionally biased toward basic and acidic residues.

The protein belongs to the osteopontin family. In terms of processing, extensively phosphorylated on serine residues.

Its subcellular location is the secreted. In terms of biological role, major non-collagenous bone protein that binds tightly to hydroxyapatite. Appears to form an integral part of the mineralized matrix. Probably important to cell-matrix interaction. Functionally, acts as a cytokine involved in enhancing production of interferon-gamma and interleukin-12 and reducing production of interleukin-10 and is essential in the pathway that leads to type I immunity. This chain is Osteopontin (SPP1), found in Gallus gallus (Chicken).